The chain runs to 126 residues: Urease subunit beta (126 aa).

It belongs to the urease beta subunit family. As to quaternary structure, heterotrimer of UreA (gamma), UreB (beta) and UreC (alpha) subunits. Three heterotrimers associate to form the active enzyme.

Its subcellular location is the cytoplasm. It catalyses the reaction urea + 2 H2O + H(+) = hydrogencarbonate + 2 NH4(+). It functions in the pathway nitrogen metabolism; urea degradation; CO(2) and NH(3) from urea (urease route): step 1/1. The chain is Urease subunit beta from Haloquadratum walsbyi (strain DSM 16790 / HBSQ001).